The following is a 61-amino-acid chain: Small ribosomal subunit protein uS14 (61 aa).

Positions 24, 27, 40, and 43 each coordinate Zn(2+).

Belongs to the universal ribosomal protein uS14 family. Zinc-binding uS14 subfamily. As to quaternary structure, part of the 30S ribosomal subunit. Contacts proteins S3 and S10. The cofactor is Zn(2+).

Its function is as follows. Binds 16S rRNA, required for the assembly of 30S particles and may also be responsible for determining the conformation of the 16S rRNA at the A site. The polypeptide is Small ribosomal subunit protein uS14 (Thermodesulfovibrio yellowstonii (strain ATCC 51303 / DSM 11347 / YP87)).